The following is a 246-amino-acid chain: Ribonuclease PH (246 aa).

Phosphate is bound by residues Arg91 and Gly129–Arg131.

It belongs to the RNase PH family. As to quaternary structure, homohexameric ring arranged as a trimer of dimers.

The catalysed reaction is tRNA(n+1) + phosphate = tRNA(n) + a ribonucleoside 5'-diphosphate. Phosphorolytic 3'-5' exoribonuclease that plays an important role in tRNA 3'-end maturation. Removes nucleotide residues following the 3'-CCA terminus of tRNAs; can also add nucleotides to the ends of RNA molecules by using nucleoside diphosphates as substrates, but this may not be physiologically important. Probably plays a role in initiation of 16S rRNA degradation (leading to ribosome degradation) during starvation. The polypeptide is Ribonuclease PH (Burkholderia ambifaria (strain ATCC BAA-244 / DSM 16087 / CCUG 44356 / LMG 19182 / AMMD) (Burkholderia cepacia (strain AMMD))).